Reading from the N-terminus, the 257-residue chain is Pyridoxine/pyridoxamine 5'-phosphate oxidase (257 aa).

Substrate is bound at residue 33-36; that stretch reads RIKY. FMN is bound at residue 90–93; sequence RFVL. Lysine 95 is a pyridoxal 5'-phosphate binding site. Residues 105–106 and lysine 112 each bind FMN; that span reads YT. Pyridoxal 5'-phosphate contacts are provided by tyrosine 152, arginine 156, and serine 160. FMN is bound by residues 169 to 170 and tryptophan 216; that span reads QS. Position 222 to 224 (222 to 224) interacts with substrate; it reads RLH. Position 226 (arginine 226) interacts with FMN.

The protein belongs to the pyridoxamine 5'-phosphate oxidase family. As to quaternary structure, homodimer. FMN serves as cofactor. Expressed in silk gland and fat body of the larva.

The catalysed reaction is pyridoxamine 5'-phosphate + O2 + H2O = pyridoxal 5'-phosphate + H2O2 + NH4(+). It carries out the reaction pyridoxine 5'-phosphate + O2 = pyridoxal 5'-phosphate + H2O2. It participates in cofactor metabolism; pyridoxal 5'-phosphate salvage; pyridoxal 5'-phosphate from pyridoxamine 5'-phosphate: step 1/1. It functions in the pathway cofactor metabolism; pyridoxal 5'-phosphate salvage; pyridoxal 5'-phosphate from pyridoxine 5'-phosphate: step 1/1. Catalyzes the oxidation of either pyridoxine 5'-phosphate (PNP) or pyridoxamine 5'-phosphate (PMP) into pyridoxal 5'-phosphate (PLP). The protein is Pyridoxine/pyridoxamine 5'-phosphate oxidase of Bombyx mori (Silk moth).